The chain runs to 235 residues: 1-(5-phosphoribosyl)-5-[(5-phosphoribosylamino)methylideneamino] imidazole-4-carboxamide isomerase (235 aa).

D8 functions as the Proton acceptor in the catalytic mechanism. The active-site Proton donor is the D127.

This sequence belongs to the HisA/HisF family.

It localises to the cytoplasm. The enzyme catalyses 1-(5-phospho-beta-D-ribosyl)-5-[(5-phospho-beta-D-ribosylamino)methylideneamino]imidazole-4-carboxamide = 5-[(5-phospho-1-deoxy-D-ribulos-1-ylimino)methylamino]-1-(5-phospho-beta-D-ribosyl)imidazole-4-carboxamide. It participates in amino-acid biosynthesis; L-histidine biosynthesis; L-histidine from 5-phospho-alpha-D-ribose 1-diphosphate: step 4/9. This chain is 1-(5-phosphoribosyl)-5-[(5-phosphoribosylamino)methylideneamino] imidazole-4-carboxamide isomerase, found in Nautilia profundicola (strain ATCC BAA-1463 / DSM 18972 / AmH).